The primary structure comprises 279 residues: tRNA (guanine-N(1)-)-methyltransferase (279 aa).

S-adenosyl-L-methionine-binding positions include glycine 117 and 141-146 (LGDYVL). Positions 256-279 (WTPDGSGFRAGGDPVADSSDTNEP) are disordered.

It belongs to the RNA methyltransferase TrmD family. In terms of assembly, homodimer.

The protein resides in the cytoplasm. The enzyme catalyses guanosine(37) in tRNA + S-adenosyl-L-methionine = N(1)-methylguanosine(37) in tRNA + S-adenosyl-L-homocysteine + H(+). Functionally, specifically methylates guanosine-37 in various tRNAs. The chain is tRNA (guanine-N(1)-)-methyltransferase from Kineococcus radiotolerans (strain ATCC BAA-149 / DSM 14245 / SRS30216).